The chain runs to 326 residues: Putative ankyrin repeat protein L25 (326 aa).

10 ANK repeats span residues 11-40 (RSEY…DLNV), 42-65 (KLFY…NIHV), 66-95 (DDEF…DIHV), 96-125 (NDDA…DIHA), 127-154 (NELV…DIHA), 155-184 (EDDE…NFRA), 185-214 (ENDY…DIHA), 216-244 (DEYA…DIHA), 246-274 (NDYG…NIHA), and 275-304 (KDDY…NIHA).

The polypeptide is Putative ankyrin repeat protein L25 (Acanthamoeba polyphaga mimivirus (APMV)).